The primary structure comprises 121 residues: Large ribosomal subunit protein bL20 (121 aa).

It belongs to the bacterial ribosomal protein bL20 family.

In terms of biological role, binds directly to 23S ribosomal RNA and is necessary for the in vitro assembly process of the 50S ribosomal subunit. It is not involved in the protein synthesizing functions of that subunit. In Wolbachia pipientis subsp. Culex pipiens (strain wPip), this protein is Large ribosomal subunit protein bL20.